Consider the following 160-residue polypeptide: Phosphopantetheine adenylyltransferase (160 aa).

Residue Ser9 coordinates substrate. Residues 9–10 (SF) and His17 contribute to the ATP site. Substrate contacts are provided by Lys41, Ile73, and Lys87. ATP is bound by residues 88-90 (GLR), Glu98, and 122-128 (YSFVSSS).

It belongs to the bacterial CoaD family. In terms of assembly, homohexamer. It depends on Mg(2+) as a cofactor.

Its subcellular location is the cytoplasm. The enzyme catalyses (R)-4'-phosphopantetheine + ATP + H(+) = 3'-dephospho-CoA + diphosphate. It functions in the pathway cofactor biosynthesis; coenzyme A biosynthesis; CoA from (R)-pantothenate: step 4/5. Its function is as follows. Reversibly transfers an adenylyl group from ATP to 4'-phosphopantetheine, yielding dephospho-CoA (dPCoA) and pyrophosphate. The polypeptide is Phosphopantetheine adenylyltransferase (Mycolicibacterium vanbaalenii (strain DSM 7251 / JCM 13017 / BCRC 16820 / KCTC 9966 / NRRL B-24157 / PYR-1) (Mycobacterium vanbaalenii)).